Consider the following 433-residue polypeptide: Ribulose bisphosphate carboxylase/oxygenase activase, chloroplastic (433 aa).

Residues 1-20 (MAAAFSSTVGAPASTPTRSS) are compositionally biased toward polar residues. Residues 1 to 53 (MAAAFSSTVGAPASTPTRSSFLGKKLNKPQVSAAVTYHGKSSSSNSRFKAMAA) constitute a chloroplast transit peptide. The segment at 1–60 (MAAAFSSTVGAPASTPTRSSFLGKKLNKPQVSAAVTYHGKSSSSNSRFKAMAAKEVDETK) is disordered. 161–168 (GGKGQGKS) is an ATP binding site.

This sequence belongs to the RuBisCO activase family.

It is found in the plastid. It localises to the chloroplast stroma. In terms of biological role, activation of RuBisCO (ribulose-1,5-bisphosphate carboxylase/oxygenase; EC 4.1.1.39) involves the ATP-dependent carboxylation of the epsilon-amino group of lysine leading to a carbamate structure. The sequence is that of Ribulose bisphosphate carboxylase/oxygenase activase, chloroplastic (RCA1) from Zea mays (Maize).